The primary structure comprises 198 residues: Probable GTP-binding protein EngB (198 aa).

The 174-residue stretch at 22-195 (DLPEIALAGR…WKAIHKFTKT (174 aa)) folds into the EngB-type G domain. Residues 30-37 (GRSNVGKS), 57-61 (GKTQT), 75-78 (DVPG), 142-145 (TKAD), and 174-176 (FSS) each bind GTP. Mg(2+)-binding residues include S37 and T59.

Belongs to the TRAFAC class TrmE-Era-EngA-EngB-Septin-like GTPase superfamily. EngB GTPase family. Requires Mg(2+) as cofactor.

Its function is as follows. Necessary for normal cell division and for the maintenance of normal septation. This chain is Probable GTP-binding protein EngB, found in Bacillus anthracis (strain A0248).